A 372-amino-acid chain; its full sequence is Cyclin-dependent kinase 9 (372 aa).

Residues 19–315 (YEKLAKIGQG…SDDALNHDFF (297 aa)) enclose the Protein kinase domain. Residue 25 to 33 (IGQGTFGEV) participates in ATP binding. The residue at position 44 (K44) is an N6-acetyllysine; by EP300/CBP, PCAF/KAT2B and GCN5/KAT2A. ATP is bound by residues K48 and 104 to 106 (DFC). K48 bears the N6-acetyllysine; by PCAF/KAT2B and GCN5/KAT2A mark. D149 serves as the catalytic Proton acceptor. Residues 166–191 (ADFGLARAFSLAKNSQPNRYTNRVVT) form a T-loop region. D167 is a binding site for ATP. S175 is modified (phosphoserine). At T186 the chain carries Phosphothreonine; by CaMK1D. Residues 343-372 (RRKGSQITQQSTNQSRNPATTNQTEFERVF) form a disordered region. S347 bears the Phosphoserine; by CDK9 and PKA mark. Residues 347–366 (SQITQQSTNQSRNPATTNQT) show a composition bias toward polar residues. Residue T350 is modified to Phosphothreonine; by CDK9. S353 is subject to Phosphoserine; by CDK9. Position 354 is a phosphothreonine; by CDK9 (T354). S357 is subject to Phosphoserine; by CDK9. T362 and T363 each carry phosphothreonine; by CDK9.

It belongs to the protein kinase superfamily. CMGC Ser/Thr protein kinase family. CDC2/CDKX subfamily. As to quaternary structure, component of the super elongation complex (SEC), at least composed of EAF1, EAF2, CDK9, MLLT3/AF9, AFF (AFF1 or AFF4), the P-TEFb complex and ELL (ELL, ELL2 or ELL3). Associates with CCNT1/cyclin-T1, CCNT2/cyclin-T2 (isoform A and isoform B) or CCNK/cyclin-K to form active P-TEFb. P-TEFb forms a complex with AFF4/AF5Q31 and is part of the super elongation complex (SEC). Component of a complex which is composed of at least 5 members: HTATSF1/Tat-SF1, P-TEFb complex, RNA pol II, SUPT5H, and NCL/nucleolin. Associates with UBR5 and forms a transcription regulatory complex composed of CDK9, RNAP II, UBR5 and TFIIS/TCEA1 that can stimulate target gene transcription (e.g. gamma fibrinogen/FGG) by recruiting their promoters. Component of the 7SK snRNP inactive complex which is composed of at least 8 members: P-TEFb (composed of CDK9 and CCNT1/cyclin-T1), HEXIM1, HEXIM2, LARP7, BCDIN3, SART3 proteins and 7SK and U6 snRNAs. This inactive 7SK snRNP complex can also interact with NCOR1 and HDAC3, probably to regulate CDK9 acetylation. Release of P-TEFb from P-TEFb/7SK snRNP complex requires both PP2B to transduce calcium Ca(2+) signaling in response to stimuli (e.g. UV or hexamethylene bisacetamide (HMBA)), and PPP1CA to dephosphorylate Thr-186. This released P-TEFb remains inactive in the pre-initiation complex with BRD4 until new Thr-186 phosphorylation occurs after the synthesis of a short RNA. Interacts with BRD4; to target chromatin binding. Interacts with JMJD6. Interacts with activated nuclear STAT3 and RELA/p65. Binds to AR and MYOD1. Forms a complex composed of CDK9, CCNT1/cyclin-T1, EP300 and GATA4 that stimulates hypertrophy in cardiomyocytes. The large PER complex involved in the repression of transcriptional termination is composed of at least PER2, CDK9, DDX5, DHX9, NCBP1 and POLR2A. Interacts with HSF1. Interacts with TBX21. Interacts with WDR43. Interacts with ZMYND8; the association appears to occur between homodimeric ZMYND8 and the activated form of the P-TEFb complex. Post-translationally, autophosphorylation at Thr-186, Ser-347, Thr-350, Ser-353, Thr-354 and Ser-357 triggers kinase activity by promoting cyclin and substrate binding upon conformational changes. Thr-186 phosphorylation requires the calcium Ca(2+) signaling pathway, including CaMK1D and calmodulin. This inhibition is relieved by Thr-29 dephosphorylation. Phosphorylation at Ser-175 inhibits kinase activity. Can be phosphorylated on either Thr-362 or Thr-363 but not on both simultaneously. In terms of processing, dephosphorylation of Thr-186 by PPM1A and PPM1B blocks CDK9 activity and may lead to CDK9 proteasomal degradation. However, PPP1CA-mediated Thr-186 dephosphorylation is required to release P-TEFb from its inactive P-TEFb/7SK snRNP complex. Dephosphorylated at Ser-347 by the PNUTS-PP1 complex during RNA polymerase II transcription pause-release. Dephosphorylation of C-terminus Thr and Ser residues by protein phosphatase-1 (PP1) triggers CDK9 activity. N6-acetylation of Lys-44 promotes kinase activity, whereas acetylation of both Lys-44 and Lys-48 mediated by PCAF/KAT2B and GCN5/KAT2A reduces kinase activity. The acetylated form associates with PML bodies in the nuclear matrix and with the transcriptionally silent HIV-1 genome; deacetylated upon transcription stimulation. Deacetylated by SIRT7, promoting the kinase activity and subsequent 'Ser-2' phosphorylation of the C-terminal domain (CTD) of RNA polymerase II. Post-translationally, polyubiquitinated and thus activated by UBR5. This ubiquitination is promoted by TFIIS/TCEA1 and favors 'Ser-2' phosphorylation of RPB1/POLR2A CTD.

It localises to the nucleus. Its subcellular location is the cytoplasm. The protein resides in the PML body. The catalysed reaction is L-seryl-[protein] + ATP = O-phospho-L-seryl-[protein] + ADP + H(+). The enzyme catalyses L-threonyl-[protein] + ATP = O-phospho-L-threonyl-[protein] + ADP + H(+). It catalyses the reaction [DNA-directed RNA polymerase] + ATP = phospho-[DNA-directed RNA polymerase] + ADP + H(+). Activation by Thr-186 phosphorylation is calcium Ca(2+) signaling pathway-dependent; actively inactivated by dephosphorylation mediated by PPP1CA, PPM1A and PPM1B. Reversibly repressed by acetylation at Lys-44 and Lys-48. Functionally, protein kinase involved in the regulation of transcription. Member of the cyclin-dependent kinase pair (CDK9/cyclin-T) complex, also called positive transcription elongation factor b (P-TEFb), which facilitates the transition from abortive to productive elongation by phosphorylating the CTD (C-terminal domain) of the large subunit of RNA polymerase II (RNAP II) POLR2A, SUPT5H and RDBP. This complex is inactive when in the 7SK snRNP complex form. Phosphorylates EP300, MYOD1, RPB1/POLR2A and AR and the negative elongation factors DSIF and NELFE. Regulates cytokine inducible transcription networks by facilitating promoter recognition of target transcription factors (e.g. TNF-inducible RELA/p65 activation and IL-6-inducible STAT3 signaling). Promotes RNA synthesis in genetic programs for cell growth, differentiation and viral pathogenesis. P-TEFb is also involved in cotranscriptional histone modification, mRNA processing and mRNA export. Modulates a complex network of chromatin modifications including histone H2B monoubiquitination (H2Bub1), H3 lysine 4 trimethylation (H3K4me3) and H3K36me3; integrates phosphorylation during transcription with chromatin modifications to control co-transcriptional histone mRNA processing. The CDK9/cyclin-K complex has also a kinase activity towards CTD of RNAP II and can substitute for CDK9/cyclin-T P-TEFb in vitro. Replication stress response protein; the CDK9/cyclin-K complex is required for genome integrity maintenance, by promoting cell cycle recovery from replication arrest and limiting single-stranded DNA amount in response to replication stress, thus reducing the breakdown of stalled replication forks and avoiding DNA damage. In addition, probable function in DNA repair of isoform 2 via interaction with KU70/XRCC6. Promotes cardiac myocyte enlargement. RPB1/POLR2A phosphorylation on 'Ser-2' in CTD activates transcription. AR phosphorylation modulates AR transcription factor promoter selectivity and cell growth. DSIF and NELF phosphorylation promotes transcription by inhibiting their negative effect. The phosphorylation of MYOD1 enhances its transcriptional activity and thus promotes muscle differentiation. Catalyzes phosphorylation of KAT5, promoting KAT5 recruitment to chromatin and histone acetyltransferase activity. This chain is Cyclin-dependent kinase 9 (CDK9), found in Bos taurus (Bovine).